Reading from the N-terminus, the 171-residue chain is S-ribosylhomocysteine lyase (171 aa).

Positions 54, 58, and 128 each coordinate Fe cation.

Belongs to the LuxS family. Homodimer. Fe cation serves as cofactor.

It carries out the reaction S-(5-deoxy-D-ribos-5-yl)-L-homocysteine = (S)-4,5-dihydroxypentane-2,3-dione + L-homocysteine. In terms of biological role, involved in the synthesis of autoinducer 2 (AI-2) which is secreted by bacteria and is used to communicate both the cell density and the metabolic potential of the environment. The regulation of gene expression in response to changes in cell density is called quorum sensing. Catalyzes the transformation of S-ribosylhomocysteine (RHC) to homocysteine (HC) and 4,5-dihydroxy-2,3-pentadione (DPD). The chain is S-ribosylhomocysteine lyase from Yersinia enterocolitica serotype O:8 / biotype 1B (strain NCTC 13174 / 8081).